The sequence spans 178 residues: Mediator of RNA polymerase II transcription subunit 28 (178 aa).

Residues 1–44 (MAAPLGGMFSGQPPGPPQAPPGLPGQASLLQAAPGAPRPSSSTL) are disordered. Residues 13–23 (PPGPPQAPPGL) are compositionally biased toward pro residues. Residues 109–145 (QVIKEDVSELRNELQRKDALVQKHLTKLRHWQQVLED) adopt a coiled-coil conformation.

The protein belongs to the Mediator complex subunit 28 family. As to quaternary structure, component of the Mediator complex, which is composed of MED1, MED4, MED6, MED7, MED8, MED9, MED10, MED11, MED12, MED13, MED13L, MED14, MED15, MED16, MED17, MED18, MED19, MED20, MED21, MED22, MED23, MED24, MED25, MED26, MED27, MED29, MED30, MED31, CCNC, CDK8 and CDC2L6/CDK11. The MED12, MED13, CCNC and CDK8 subunits form a distinct module termed the CDK8 module. Mediator containing the CDK8 module is less active than Mediator lacking this module in supporting transcriptional activation. Individual preparations of the Mediator complex lacking one or more distinct subunits have been variously termed ARC, CRSP, DRIP, PC2, SMCC and TRAP. Forms a ternary complex with NF2/merlin and GRB2. Binds to actin. As to expression, widely expressed. Highly expressed in vascular tissues such as placenta, testis and liver.

It is found in the nucleus. It localises to the cytoplasm. The protein resides in the membrane. In terms of biological role, component of the Mediator complex, a coactivator involved in the regulated transcription of nearly all RNA polymerase II-dependent genes. Mediator functions as a bridge to convey information from gene-specific regulatory proteins to the basal RNA polymerase II transcription machinery. Mediator is recruited to promoters by direct interactions with regulatory proteins and serves as a scaffold for the assembly of a functional preinitiation complex with RNA polymerase II and the general transcription factors. May be part of a complex containing NF2/merlin that participates in cellular signaling to the actin cytoskeleton downstream of tyrosine kinase signaling pathways. The chain is Mediator of RNA polymerase II transcription subunit 28 (MED28) from Homo sapiens (Human).